The sequence spans 973 residues: NLR family member X1 (973 aa).

A mitochondrion-targeting transit peptide spans 1-84 (MRWGCHLPRT…EAIQRHRRNL (84 aa)). Residues 73-554 (ATEAIQRHRR…RILPLLFNLL (482 aa)) form a required for interaction with MAVS region. The 324-residue stretch at 158-481 (QTVVLYGTVG…LRFFLAPCVE (324 aa)) folds into the NACHT domain. Residue 164 to 171 (GTVGTGKS) coordinates ATP. The required for the repression of MAVS-induced interferon signaling stretch occupies residues 554-972 (LKVVPRVFGR…TLLEQLGGSG (419 aa)). The LRRNT domain occupies 665–692 (RQVLPPSELLDHLFFHYEFQNQRFSAEV). 8 LRR repeats span residues 693 to 716 (LGSL…VVAS), 722 to 745 (RHPL…TLMP), 747 to 775 (LLRA…LLHD), 776 to 799 (QCQI…VLMD), 809 to 832 (HLSL…LDRN), 833 to 855 (KQLQ…ALAK), 856 to 875 (AARK…ELSS), and 876 to 897 (EGRQ…VVAS). An LRRCT domain is found at 904-968 (VSEYWSVILS…SEVKTLLEQL (65 aa)).

It belongs to the NLRP family. Homohexamer. Interacts with MAVS. Interacts with TUFM.

Its subcellular location is the mitochondrion outer membrane. In terms of biological role, participates in antiviral signaling. Acts as a negative regulator of MAVS-mediated antiviral responses, through the inhibition of the virus-induced RLH (RIG-like helicase)-MAVS interaction. Instead, promotes autophagy by interacting with TUFM and subsequently recruiting the autophagy-related proteins ATG5 and ATG12. Also regulates MAVS-dependent NLRP3 inflammasome activation to attenuate apoptosis. Has no inhibitory function on NF-kappa-B signaling pathway, but enhances NF-kappa-B and JUN N-terminal kinase dependent signaling through the production of reactive oxygen species. Regulates viral mediated-inflammation and energy metabolism in a sex-dependent manner. In females, prevents uncontrolled inflammation and energy metabolism and thus, may contribute to the sex differences observed in infectious and inflammatory diseases. In Rattus norvegicus (Rat), this protein is NLR family member X1 (Nlrx1).